Here is an 859-residue protein sequence, read N- to C-terminus: Protein EFR3 homolog (859 aa).

Residues 696–714 (RKNDGSGDQWQNDTPNFDS) are compositionally biased toward polar residues. Residues 696 to 728 (RKNDGSGDQWQNDTPNFDSTDGRESPSGYKTVG) are disordered.

This sequence belongs to the EFR3 family.

The sequence is that of Protein EFR3 homolog from Caenorhabditis elegans.